A 572-amino-acid polypeptide reads, in one-letter code: Proline--tRNA ligase (572 aa).

Belongs to the class-II aminoacyl-tRNA synthetase family. ProS type 1 subfamily. Homodimer.

It localises to the cytoplasm. It carries out the reaction tRNA(Pro) + L-proline + ATP = L-prolyl-tRNA(Pro) + AMP + diphosphate. Its function is as follows. Catalyzes the attachment of proline to tRNA(Pro) in a two-step reaction: proline is first activated by ATP to form Pro-AMP and then transferred to the acceptor end of tRNA(Pro). As ProRS can inadvertently accommodate and process non-cognate amino acids such as alanine and cysteine, to avoid such errors it has two additional distinct editing activities against alanine. One activity is designated as 'pretransfer' editing and involves the tRNA(Pro)-independent hydrolysis of activated Ala-AMP. The other activity is designated 'posttransfer' editing and involves deacylation of mischarged Ala-tRNA(Pro). The misacylated Cys-tRNA(Pro) is not edited by ProRS. The chain is Proline--tRNA ligase from Haemophilus influenzae (strain 86-028NP).